Reading from the N-terminus, the 274-residue chain is 3',5'-cyclic adenosine monophosphate phosphodiesterase CpdA (274 aa).

The Fe cation site is built by D21, H23, D63, N93, H163, H202, and H204. AMP is bound by residues H23, D63, and 93–94; that span reads NH. An AMP-binding site is contributed by H204.

This sequence belongs to the cyclic nucleotide phosphodiesterase class-III family. It depends on Fe(2+) as a cofactor.

The catalysed reaction is 3',5'-cyclic AMP + H2O = AMP + H(+). Hydrolyzes cAMP to 5'-AMP. Plays an important regulatory role in modulating the intracellular concentration of cAMP, thereby influencing cAMP-dependent processes. May coordinate responses to nutritional stress, ensuring optimal competence development. The sequence is that of 3',5'-cyclic adenosine monophosphate phosphodiesterase CpdA from Haemophilus influenzae (strain ATCC 51907 / DSM 11121 / KW20 / Rd).